We begin with the raw amino-acid sequence, 182 residues long: Meiotically up-regulated gene 82 protein (182 aa).

Residues 161–182 form a disordered region; sequence EKRLSEKKYKQKKKTQRRITMD. Positions 169-182 are enriched in basic residues; sequence YKQKKKTQRRITMD.

This sequence belongs to the prokaryotic/mitochondrial release factor family.

Its subcellular location is the mitochondrion. Functionally, has a role in meiosis. The polypeptide is Meiotically up-regulated gene 82 protein (mug82) (Schizosaccharomyces pombe (strain 972 / ATCC 24843) (Fission yeast)).